A 201-amino-acid chain; its full sequence is Inner membrane protein YnbA (201 aa).

The Periplasmic segment spans residues M1 to G43. Residues L44–I64 form a helical membrane-spanning segment. Over R65–R84 the chain is Cytoplasmic. A helical membrane pass occupies residues L85–F107. The Periplasmic segment spans residues L108–V116. The helical transmembrane segment at I117 to V139 threads the bilayer. The Cytoplasmic portion of the chain corresponds to R140 to R151. Residues A152–N172 traverse the membrane as a helical segment. Residues N173–L175 lie on the Periplasmic side of the membrane. A helical membrane pass occupies residues W176 to L196. Topologically, residues M197–I201 are cytoplasmic.

It is found in the cell inner membrane. In Escherichia coli (strain K12), this protein is Inner membrane protein YnbA (ynbA).